The primary structure comprises 358 residues: MGLAAPKNRSKISNDPQNTTWANNTSRFGHRILTSQGWQPGDSLGASDAAHAAHYTVASQSHIRVLLKDDNLGLGAKRGSERAENFGLAGLESILGRLNGKEAEVKKEEERREEIEKRAFVYRKYGMMNFVSGGFLVGDKIKSRDEVKTETQAKVEVKSEPESDGAKEDDRKKKRKRKDRDEAGVEGEEEPKLKRKKKSMDLRDQAKKDIAAESSKDKKGKKSKKDKKAVTSDPEPTSSGVASPASDPEPLTDKARRKAEKKARKEEKRLKKALKKAAKEAAKPMGDVEDLSSESEDESTPSASRPATGTSTPTVSAAGLTFNPRGMHSVRQKWIRSKKSATMDAQAMREIFMIKTPS.

Disordered regions lie at residues 1-26 (MGLAAPKNRSKISNDPQNTTWANNTS) and 146-342 (EVKT…KSAT). Positions 11-26 (KISNDPQNTTWANNTS) are enriched in polar residues. In terms of domain architecture, G-patch spans 25–79 (TSRFGHRILTSQGWQPGDSLGASDAAHAAHYTVASQSHIRVLLKDDNLGLGAKRG). Basic and acidic residues-rich tracts occupy residues 146–171 (EVKTETQAKVEVKSEPESDGAKEDDR) and 199–217 (SMDLRDQAKKDIAAESSKD). Residues 218 to 227 (KKGKKSKKDK) show a composition bias toward basic residues. Residues 287 to 299 (DVEDLSSESEDES) show a composition bias toward acidic residues. Over residues 300-315 (TPSASRPATGTSTPTV) the composition is skewed to polar residues. Basic residues predominate over residues 328–339 (HSVRQKWIRSKK).

This sequence belongs to the PINX1 family.

It localises to the nucleus. The protein resides in the nucleolus. Its function is as follows. Involved in rRNA-processing at A0, A1 and A2 sites and negatively regulates telomerase. The chain is Protein PXR1 (PXR1) from Phaeosphaeria nodorum (strain SN15 / ATCC MYA-4574 / FGSC 10173) (Glume blotch fungus).